Consider the following 183-residue polypeptide: Probable apo-citrate lyase phosphoribosyl-dephospho-CoA transferase (183 aa).

It belongs to the CitX family.

It carries out the reaction apo-[citrate lyase ACP] + 2'-(5''-triphospho-alpha-D-ribosyl)-3'-dephospho-CoA = holo-[citrate lyase ACP] + diphosphate. Transfers 2-(5''-triphosphoribosyl)-3'-dephosphocoenzyme-A on a serine residue to the apo-acyl carrier protein (gamma chain) of the citrate lyase to yield holo-acyl carrier protein. This Escherichia coli (strain 55989 / EAEC) protein is Probable apo-citrate lyase phosphoribosyl-dephospho-CoA transferase.